The primary structure comprises 418 residues: AP-3 complex subunit mu-1 (418 aa).

Residues 176–417 (NNEAYFDVVE…ITKAGKFQVR (242 aa)) enclose the MHD domain.

This sequence belongs to the adaptor complexes medium subunit family. As to quaternary structure, adaptor protein complex 3 (AP-3) is a heterotetramer composed of two large adaptins (delta-type subunit AP3D1 and beta-type subunit AP3B1 or AP3B2), a medium adaptin (mu-type subunit AP3M1 or AP3M2) and a small adaptin (sigma-type subunit APS1 or AP3S2). Interacts with AGAP1. AP-3 associates with the BLOC-1 complex.

It is found in the golgi apparatus. It localises to the cytoplasmic vesicle membrane. Functionally, part of the AP-3 complex, an adaptor-related complex which is not clathrin-associated. The complex is associated with the Golgi region as well as more peripheral structures. It facilitates the budding of vesicles from the Golgi membrane and may be directly involved in trafficking to lysosomes. In concert with the BLOC-1 complex, AP-3 is required to target cargos into vesicles assembled at cell bodies for delivery into neurites and nerve terminals. The protein is AP-3 complex subunit mu-1 (Ap3m1) of Rattus norvegicus (Rat).